The primary structure comprises 346 residues: Annexin A1 (346 aa).

Ala-2 carries the N-acetylalanine modification. Ser-5 bears the Phosphoserine; by TRPM7 mark. Gln-19 is covalently cross-linked (Isoglutamyl lysine isopeptide (Gln-Lys) (interchain with K-?)). Phosphotyrosine; by EGFR is present on Tyr-21. A disordered region spans residues 25–47 (VKGSKGGPGSAVSPYPTFNPSSD). 2 positions are modified to phosphoserine: Ser-34 and Ser-37. Thr-41 carries the post-translational modification Phosphothreonine. 4 Annexin repeats span residues 42–113 (FNPS…ALLK), 114–185 (TPAQ…SLAK), 197–269 (DLAD…VVVK), and 273–344 (SKPM…ALCG). At Lys-58 the chain carries N6-acetyllysine. Ca(2+)-binding residues include Gly-59, Val-60, Glu-62, Lys-97, Leu-100, Glu-105, Met-127, Gly-129, Gly-131, Thr-132, and Glu-134. Thr-136 is modified (phosphothreonine). Positions 171, 210, and 213 each coordinate Ca(2+). Lys-214 is covalently cross-linked (Glycyl lysine isopeptide (Lys-Gly) (interchain with G-Cter in SUMO1); alternate). Lys-214 is covalently cross-linked (Glycyl lysine isopeptide (Lys-Gly) (interchain with G-Cter in SUMO2); alternate). Position 215 (Gly-215) interacts with Ca(2+). Residue Lys-239 is modified to N6-acetyllysine. The Ca(2+) site is built by Asp-253, Glu-255, and Leu-256. Lys-257 participates in a covalent cross-link: Glycyl lysine isopeptide (Lys-Gly) (interchain with G-Cter in SUMO1). Ca(2+) contacts are provided by Glu-261, Met-286, Gly-288, and Gly-290. The residue at position 312 (Lys-312) is an N6-acetyllysine. An intrachain disulfide couples Cys-324 to Cys-343. Residues Leu-328, Glu-330, and Thr-331 each contribute to the Ca(2+) site. A Glycyl lysine isopeptide (Lys-Gly) (interchain with G-Cter in SUMO1) cross-link involves residue Lys-332. Glu-336 contributes to the Ca(2+) binding site.

The protein belongs to the annexin family. As to quaternary structure, homodimer; non-covalently linked. Homodimer; linked by transglutamylation. Homodimers linked by transglutamylation are observed in placenta, but not in other tissues. Interacts with S100A11. Heterotetramer, formed by two molecules each of S100A11 and ANXA1. Interacts with DYSF. Interacts with EGFR. Post-translationally, phosphorylated by EGFR. Phosphorylated by protein kinase C and TRPM7. Phosphorylated in response to EGF treatment. Sumoylated. In terms of processing, proteolytically cleaved by cathepsin CTSG to release the active N-terminal peptide Ac2-26. Detected in lung and spleen (at protein level).

It is found in the nucleus. Its subcellular location is the cytoplasm. It localises to the cell projection. The protein localises to the cilium. The protein resides in the basolateral cell membrane. It is found in the lateral cell membrane. Its subcellular location is the early endosome. It localises to the cell membrane. The protein localises to the cytoplasmic vesicle membrane. The protein resides in the apical cell membrane. It is found in the membrane. Its subcellular location is the endosome. It localises to the secreted. The protein localises to the extracellular space. The protein resides in the extracellular exosome. It is found in the cytoplasmic vesicle. Its subcellular location is the secretory vesicle lumen. It localises to the phagocytic cup. Plays important roles in the innate immune response as effector of glucocorticoid-mediated responses and regulator of the inflammatory process. Has anti-inflammatory activity. Plays a role in glucocorticoid-mediated down-regulation of the early phase of the inflammatory response. Contributes to the adaptive immune response by enhancing signaling cascades that are triggered by T-cell activation, regulates differentiation and proliferation of activated T-cells. Promotes the differentiation of T-cells into Th1 cells and negatively regulates differentiation into Th2 cells. Has no effect on unstimulated T-cells. Negatively regulates hormone exocytosis via activation of the formyl peptide receptors and reorganization of the actin cytoskeleton. Has high affinity for Ca(2+) and can bind up to eight Ca(2+) ions. Displays Ca(2+)-dependent binding to phospholipid membranes. Plays a role in the formation of phagocytic cups and phagosomes. Plays a role in phagocytosis by mediating the Ca(2+)-dependent interaction between phagosomes and the actin cytoskeleton. In terms of biological role, functions at least in part by activating the formyl peptide receptors and downstream signaling cascades. Promotes chemotaxis of granulocytes and monocytes via activation of the formyl peptide receptors. Promotes rearrangement of the actin cytoskeleton, cell polarization and cell migration. Promotes resolution of inflammation and wound healing. Acts via neutrophil N-formyl peptide receptors to enhance the release of CXCL2. This chain is Annexin A1 (ANXA1), found in Sus scrofa (Pig).